Consider the following 222-residue polypeptide: Ribosomal RNA small subunit methyltransferase G (222 aa).

S-adenosyl-L-methionine-binding positions include Gly84, Phe89, 141–142, and Arg154; that span reads VE.

Belongs to the methyltransferase superfamily. RNA methyltransferase RsmG family.

The protein localises to the cytoplasm. The catalysed reaction is guanosine(527) in 16S rRNA + S-adenosyl-L-methionine = N(7)-methylguanosine(527) in 16S rRNA + S-adenosyl-L-homocysteine. Its function is as follows. Specifically methylates the N7 position of guanine in position 527 of 16S rRNA. This Bradyrhizobium sp. (strain ORS 278) protein is Ribosomal RNA small subunit methyltransferase G.